A 521-amino-acid polypeptide reads, in one-letter code: Vang-like protein 2-A (521 aa).

The interval 1-81 (MDNDSQYSGY…TTVVTGTSEH (81 aa)) is disordered. Residues 1-108 (MDNDSQYSGY…AKLDCSRHLG (108 aa)) are Cytoplasmic-facing. The segment covering 15 to 33 (GHSRSSRKHRDRRERHRSK) has biased composition (basic residues). Over residues 57 to 67 (ESTRGEDRDDN) the composition is skewed to basic and acidic residues. The span at 69 to 81 (GETTTVVTGTSEH) shows a compositional bias: low complexity. A helical membrane pass occupies residues 109–129 (VVIGGALALLSFLTPIAFMLL). Topologically, residues 130 to 147 (PQILWREDLEQCGTACEG) are extracellular. A helical membrane pass occupies residues 148–168 (LFISVAFKLLILLLGSWALFF). Topologically, residues 169–178 (RRPKAFFPRV) are cytoplasmic. A helical membrane pass occupies residues 179–199 (FVFRALLMVLVFLLVVSYWLF). At 200 to 218 (YGVRILESRDKNYQGIVQY) the chain is on the extracellular side. The chain crosses the membrane as a helical span at residues 219–239 (AVSLVDALLFVHYLAVVLLEL). Over 240–521 (RQLQPQFTIK…VMRLQSETSV (282 aa)) the chain is Cytoplasmic. A PDZ-binding motif is present at residues 518 to 521 (ETSV).

This sequence belongs to the Vang family. Interacts with dvl/dsh. Interacts with prickle3. In terms of tissue distribution, during gastrulation, broadly expressed throughout the marginal zone and animal cap region. From the neurula stages, expression becomes concentrated in neural tissues, in the neural plate and neural tube.

The protein localises to the cell membrane. Its function is as follows. Has a role in non-canonical Wnt/planar cell polarity (PCP) signaling; can recruit dvl/dsh and prickle from the cytoplasm to the plasma membrane. Acts in a PCP complex to regulate the polarized assembly of fibronectrin on the surface of the mesoderm during gastrulation. Regulates convergent extension cell movements in both dorsal mesoderm and neural tissue during gastrulation, without affecting cell fate. Regulates neural fold closure during neurulation. May be required for cell surface localization of fzd3 and fzd6 in the inner ear. The polypeptide is Vang-like protein 2-A (vangl2-a) (Xenopus laevis (African clawed frog)).